Here is a 464-residue protein sequence, read N- to C-terminus: ATP-dependent protease ATPase subunit HslU (464 aa).

ATP contacts are provided by residues I19, 61–66 (GVGKTE), D277, E342, and R414.

Belongs to the ClpX chaperone family. HslU subfamily. In terms of assembly, a double ring-shaped homohexamer of HslV is capped on each side by a ring-shaped HslU homohexamer. The assembly of the HslU/HslV complex is dependent on binding of ATP.

Its subcellular location is the cytoplasm. Functionally, ATPase subunit of a proteasome-like degradation complex; this subunit has chaperone activity. The binding of ATP and its subsequent hydrolysis by HslU are essential for unfolding of protein substrates subsequently hydrolyzed by HslV. HslU recognizes the N-terminal part of its protein substrates and unfolds these before they are guided to HslV for hydrolysis. In Lactobacillus gasseri (strain ATCC 33323 / DSM 20243 / BCRC 14619 / CIP 102991 / JCM 1131 / KCTC 3163 / NCIMB 11718 / NCTC 13722 / AM63), this protein is ATP-dependent protease ATPase subunit HslU.